The sequence spans 245 residues: tRNA pseudouridine synthase A (245 aa).

The active-site Nucleophile is aspartate 52. Substrate is bound at residue tyrosine 111.

Belongs to the tRNA pseudouridine synthase TruA family. As to quaternary structure, homodimer.

The catalysed reaction is uridine(38/39/40) in tRNA = pseudouridine(38/39/40) in tRNA. In terms of biological role, formation of pseudouridine at positions 38, 39 and 40 in the anticodon stem and loop of transfer RNAs. The sequence is that of tRNA pseudouridine synthase A from Rickettsia peacockii (strain Rustic).